The sequence spans 334 residues: Malate dehydrogenase (334 aa).

16-22 (GAAGQIA) is a binding site for NAD(+). Arginine 97 and arginine 103 together coordinate substrate. Residues asparagine 110, glutamine 117, and 134–136 (VGN) each bind NAD(+). 2 residues coordinate substrate: asparagine 136 and arginine 167. Histidine 192 functions as the Proton acceptor in the catalytic mechanism.

The protein belongs to the LDH/MDH superfamily. MDH type 2 family.

It catalyses the reaction (S)-malate + NAD(+) = oxaloacetate + NADH + H(+). In terms of biological role, catalyzes the reversible oxidation of malate to oxaloacetate. The protein is Malate dehydrogenase of Nocardia farcinica (strain IFM 10152).